The sequence spans 552 residues: HTH-type transcriptional regulator SgrR (552 aa).

The region spanning 1 to 116 is the HTH marR-type domain; the sequence is MPSGRLQQQF…LISHLGRSFR (116 aa). Positions 26–49 form a DNA-binding region, H-T-H motif; the sequence is LNELADLLNCSRRHMRTLLNTMQA. The tract at residues 163–493 is solute-binding; that stretch reads ELEADIAHHW…RDWQDDAAQW (331 aa).

Activates the small RNA gene sgrS under glucose-phosphate stress conditions as well as yfdZ. Represses its own transcription under both stress and non-stress conditions. Might act as a sensor of the intracellular accumulation of phosphoglucose by binding these molecules in its C-terminal solute-binding domain. The protein is HTH-type transcriptional regulator SgrR of Salmonella choleraesuis (strain SC-B67).